Here is a 422-residue protein sequence, read N- to C-terminus: UDP-N-acetylglucosamine 1-carboxyvinyltransferase (422 aa).

Phosphoenolpyruvate is bound at residue 22 to 23 (KN). A UDP-N-acetyl-alpha-D-glucosamine-binding site is contributed by Arg-94. Cys-118 acts as the Proton donor in catalysis. At Cys-118 the chain carries 2-(S-cysteinyl)pyruvic acid O-phosphothioketal. UDP-N-acetyl-alpha-D-glucosamine-binding positions include 123–127 (RPVDL), Asp-309, and Ile-331.

It belongs to the EPSP synthase family. MurA subfamily.

It is found in the cytoplasm. It catalyses the reaction phosphoenolpyruvate + UDP-N-acetyl-alpha-D-glucosamine = UDP-N-acetyl-3-O-(1-carboxyvinyl)-alpha-D-glucosamine + phosphate. Its pathway is cell wall biogenesis; peptidoglycan biosynthesis. Its function is as follows. Cell wall formation. Adds enolpyruvyl to UDP-N-acetylglucosamine. In Cereibacter sphaeroides (strain KD131 / KCTC 12085) (Rhodobacter sphaeroides), this protein is UDP-N-acetylglucosamine 1-carboxyvinyltransferase.